Consider the following 163-residue polypeptide: Nucleotide-binding protein YajQ (163 aa).

This sequence belongs to the YajQ family.

In terms of biological role, nucleotide-binding protein. This is Nucleotide-binding protein YajQ from Escherichia coli (strain K12 / DH10B).